We begin with the raw amino-acid sequence, 519 residues long: cAMP-dependent protein kinase catalytic subunit (519 aa).

The tract at residues 1–195 (MLPDTGILSP…SQTLQKAENA (195 aa)) is disordered. Composition is skewed to polar residues over residues 10–25 (PFTT…SQTL), 116–159 (VTPS…TSPI), and 173–191 (TPVN…TLQK). The 256-residue stretch at 208-463 (FNFQRTLGTG…SRSVLEHPWF (256 aa)) folds into the Protein kinase domain. ATP-binding positions include 214–222 (LGTGSFGRV) and K237. The Proton acceptor role is filled by D331. Residues 464-519 (AEVNWERLLSKQIEPPYVPPVRGGIGDASLFDKYPEETEEYGKDGPDQYGHFFTDF) form the AGC-kinase C-terminal domain.

This sequence belongs to the protein kinase superfamily. Ser/Thr protein kinase family.

The catalysed reaction is L-seryl-[protein] + ATP = O-phospho-L-seryl-[protein] + ADP + H(+). It carries out the reaction L-threonyl-[protein] + ATP = O-phospho-L-threonyl-[protein] + ADP + H(+). With respect to regulation, activated by cAMP. Functionally, functions downstream of adenylate cyclase to regulate trap-development for nematode capture. The polypeptide is cAMP-dependent protein kinase catalytic subunit (Arthrobotrys oligospora (strain ATCC 24927 / CBS 115.81 / DSM 1491) (Nematode-trapping fungus)).